A 211-amino-acid chain; its full sequence is Dephospho-CoA kinase (211 aa).

In terms of domain architecture, DPCK spans 3-206; it reads VIGLTGGIAT…GGRGRRLPNA (204 aa). Residue 11 to 16 coordinates ATP; it reads ATGKST.

It belongs to the CoaE family.

Its subcellular location is the cytoplasm. The enzyme catalyses 3'-dephospho-CoA + ATP = ADP + CoA + H(+). It participates in cofactor biosynthesis; coenzyme A biosynthesis; CoA from (R)-pantothenate: step 5/5. In terms of biological role, catalyzes the phosphorylation of the 3'-hydroxyl group of dephosphocoenzyme A to form coenzyme A. The polypeptide is Dephospho-CoA kinase (Anaeromyxobacter dehalogenans (strain 2CP-C)).